Consider the following 270-residue polypeptide: Small ribosomal subunit protein eS1 (270 aa).

Residues 235–270 (GTSKGGAASTAAVAKGEEGVKVDRPEGYEPPVLETV) form a disordered region. The span at 239-248 (GGAASTAAVA) shows a compositional bias: low complexity. Basic and acidic residues predominate over residues 249-261 (KGEEGVKVDRPEG).

It belongs to the eukaryotic ribosomal protein eS1 family. In terms of assembly, component of the small ribosomal subunit. Mature ribosomes consist of a small (40S) and a large (60S) subunit. The 40S subunit contains about 33 different proteins and 1 molecule of RNA (18S). The 60S subunit contains about 49 different proteins and 3 molecules of RNA (28S, 5.8S and 5S).

It localises to the cytoplasm. The protein is Small ribosomal subunit protein eS1 of Ixodes scapularis (Black-legged tick).